Reading from the N-terminus, the 452-residue chain is Zinc finger protein GAI-ASSOCIATED FACTOR 1 (452 aa).

The segment covering M1–T32 has biased composition (polar residues). The interval M1–S47 is disordered. At S53 the chain carries Phosphoserine. 2 consecutive C2H2-type zinc fingers follow at residues F63–H85 and Y104–H134. The short motif at I126 to K133 is the Nuclear localization signal element. The C2H2-type 2; degenerate zinc finger occupies W139 to G162. Residues C141, C144, H157, C161, C168, C170, H183, and C187 each coordinate Zn(2+). The CCHC-type 2; atypical zinc-finger motif lies at Y166–A189. An SHR-binding region spans residues R176–D188. The tract at residues R196–E254 is disordered. Positions I231–P245 are enriched in polar residues.

In terms of assembly, interacts with the DELLA proteins (e.g. GAI/RGA2, RGA, RGL1, RGL2 and RGLG3), acting as coactivators and with TPR1 and TPR4, acting as a corepressors, at the promoter of GA20OX2 gene. As to expression, observed in vegetative tissues. Mainly expressed in hypocotyls, petioles, shoot apices, root tips, and trichomes, and, at low levels, in leaves, stems and flowers.

It is found in the nucleus. Its activity is regulated as follows. Transcription activation is repressed by gibberellic acid GA(3) in the presence of TPR4. Transcription factor that acts as a positive regulator of gibberellin (GA) action, homeostasis and signaling. GA converts the GAF1 complex from transcriptional activator to repressor via the degradation of DELLA proteins. The protein is Zinc finger protein GAI-ASSOCIATED FACTOR 1 of Arabidopsis thaliana (Mouse-ear cress).